Here is a 133-residue protein sequence, read N- to C-terminus: Large ribosomal subunit protein uL15 (133 aa).

Residues 1–64 (MGLENLKPAK…QPLQRRLPKI (64 aa)) are disordered.

This sequence belongs to the universal ribosomal protein uL15 family. In terms of assembly, part of the 50S ribosomal subunit.

Its function is as follows. Binds to the 23S rRNA. In Helicobacter pylori (strain J99 / ATCC 700824) (Campylobacter pylori J99), this protein is Large ribosomal subunit protein uL15.